Consider the following 142-residue polypeptide: Large-conductance mechanosensitive channel (142 aa).

A run of 3 helical transmembrane segments spans residues 14 to 34 (VMDLAVGVIIGAAFSKIVDSV), 38 to 58 (LVMPVVGAITGGGFDFSNYFL), and 82 to 102 (GNFITVLINFLILAWIIFLLI).

This sequence belongs to the MscL family. Homopentamer.

Its subcellular location is the cell inner membrane. Channel that opens in response to stretch forces in the membrane lipid bilayer. May participate in the regulation of osmotic pressure changes within the cell. This chain is Large-conductance mechanosensitive channel, found in Rhizobium meliloti (strain 1021) (Ensifer meliloti).